The following is a 267-amino-acid chain: MTSVSDCFAQLRDRGQCALIPFLTAGDPDLATTASALRQLDASGADLIELGVPYSDPLADGPVIQAAATRALQRGTRLDQVLEMVTELSPEIRAPIILFTYYNPIYHRGVAEFLQQIAKAGVRGLVVPDLPLEESENLLQQAADLGIEVTLLVAPTSSKERIEKIALRSQGFIYLVSTTGVTGMRTKVENRVQDLIADLRQVTDKPIGVGFGISRTEHARQVMDWGADAAIVGSAFVNRLSEGSPSQGLSAISTFCRSLKSSLLLDA.

Residues Glu49 and Asp60 each act as proton acceptor in the active site.

Belongs to the TrpA family. In terms of assembly, tetramer of two alpha and two beta chains.

It catalyses the reaction (1S,2R)-1-C-(indol-3-yl)glycerol 3-phosphate + L-serine = D-glyceraldehyde 3-phosphate + L-tryptophan + H2O. It functions in the pathway amino-acid biosynthesis; L-tryptophan biosynthesis; L-tryptophan from chorismate: step 5/5. Its function is as follows. The alpha subunit is responsible for the aldol cleavage of indoleglycerol phosphate to indole and glyceraldehyde 3-phosphate. In Acaryochloris marina (strain MBIC 11017), this protein is Tryptophan synthase alpha chain.